Consider the following 351-residue polypeptide: 3-dehydroquinate synthase (351 aa).

Residues 60 to 65 (DGEEYK), 94 to 98 (GVISD), 118 to 119 (TT), lysine 131, lysine 140, and 158 to 161 (FLKT) each bind NAD(+). Zn(2+) contacts are provided by glutamate 173, histidine 239, and histidine 256.

It belongs to the sugar phosphate cyclases superfamily. Dehydroquinate synthase family. It depends on Co(2+) as a cofactor. Zn(2+) serves as cofactor. The cofactor is NAD(+).

The protein resides in the cytoplasm. The catalysed reaction is 7-phospho-2-dehydro-3-deoxy-D-arabino-heptonate = 3-dehydroquinate + phosphate. It functions in the pathway metabolic intermediate biosynthesis; chorismate biosynthesis; chorismate from D-erythrose 4-phosphate and phosphoenolpyruvate: step 2/7. Functionally, catalyzes the conversion of 3-deoxy-D-arabino-heptulosonate 7-phosphate (DAHP) to dehydroquinate (DHQ). In Campylobacter jejuni subsp. jejuni serotype O:23/36 (strain 81-176), this protein is 3-dehydroquinate synthase.